Reading from the N-terminus, the 467-residue chain is tRNA modification GTPase MnmE (467 aa).

Residues arginine 25, glutamate 87, and lysine 130 each coordinate (6S)-5-formyl-5,6,7,8-tetrahydrofolate. The TrmE-type G domain maps to 226–389 (GLSVVLAGQP…LRGELLRIAG (164 aa)). Asparagine 236 contributes to the K(+) binding site. Residues 236 to 241 (NVGKSS), 255 to 261 (TPIAGTT), and 280 to 283 (DTAG) each bind GTP. Residue serine 240 coordinates Mg(2+). 3 residues coordinate K(+): threonine 255, isoleucine 257, and threonine 260. Residue threonine 261 coordinates Mg(2+). Lysine 467 serves as a coordination point for (6S)-5-formyl-5,6,7,8-tetrahydrofolate.

This sequence belongs to the TRAFAC class TrmE-Era-EngA-EngB-Septin-like GTPase superfamily. TrmE GTPase family. In terms of assembly, homodimer. Heterotetramer of two MnmE and two MnmG subunits. Requires K(+) as cofactor.

It is found in the cytoplasm. Functionally, exhibits a very high intrinsic GTPase hydrolysis rate. Involved in the addition of a carboxymethylaminomethyl (cmnm) group at the wobble position (U34) of certain tRNAs, forming tRNA-cmnm(5)s(2)U34. This Burkholderia mallei (strain NCTC 10247) protein is tRNA modification GTPase MnmE.